The following is a 100-amino-acid chain: Small ribosomal subunit protein uS14c (100 aa).

Belongs to the universal ribosomal protein uS14 family. In terms of assembly, part of the 30S ribosomal subunit.

It localises to the plastid. It is found in the chloroplast. Binds 16S rRNA, required for the assembly of 30S particles. In Populus alba (White poplar), this protein is Small ribosomal subunit protein uS14c.